Reading from the N-terminus, the 255-residue chain is tRNA pseudouridine synthase A (255 aa).

Asp53 serves as the catalytic Nucleophile. A substrate-binding site is contributed by Tyr113.

It belongs to the tRNA pseudouridine synthase TruA family. In terms of assembly, homodimer.

The enzyme catalyses uridine(38/39/40) in tRNA = pseudouridine(38/39/40) in tRNA. In terms of biological role, formation of pseudouridine at positions 38, 39 and 40 in the anticodon stem and loop of transfer RNAs. This Acidiphilium cryptum (strain JF-5) protein is tRNA pseudouridine synthase A.